Consider the following 377-residue polypeptide: Guanine nucleotide-binding protein subunit alpha-13 (377 aa).

2 S-palmitoyl cysteine lipidation sites follow: Cys14 and Cys18. The 331-residue stretch at 47-377 (RLVKILLLGA…HDNLKQLMLQ (331 aa)) folds into the G-alpha domain. Positions 50-63 (KILLLGAGESGKST) are G1 motif. Residues 58-63 (ESGKST), Ser173, and 197-200 (LLAR) contribute to the GTP site. Ser62 serves as a coordination point for Mg(2+). Residues 195–203 (DILLARRPT) are G2 motif. Mg(2+) is bound at residue Thr203. Position 203 is a phosphothreonine (Thr203). The G3 motif stretch occupies residues 218-227 (FKMVDVGGQR). Residues 287 to 294 (ILFLNKTD) form a G4 motif region. Residues 291–294 (NKTD) and Ala349 each bind GTP. The interval 347–352 (TTAINT) is G5 motif.

The protein belongs to the G-alpha family. G(12) subfamily. As to quaternary structure, g proteins are composed of 3 units; alpha, beta and gamma. The alpha chain contains the guanine nucleotide binding site. Interacts with UBXD5. Interacts with HAX1. Interacts (in GTP-bound form) with PPP5C (via TPR repeats); activates PPP5C phosphatase activity and translocates PPP5C to the cell membrane. Interacts with RGS22. Interacts (in GTP-bound form) with ARHGEF1. Interacts (in GTP-bound form) with ARHGEF11 (via RGS domain). Interacts (in GTP-bound form) with ARHGEF12 (via RGS domain). Interacts with CTNND1. Interacts with GAS2L2. Interacts with GPR35. Interacts with GPR174. Phosphorylation on Thr-203 destabilizes the heterotrimer of alpha, beta and gamma, and inhibits Rho activation. Expressed in brain and testis, as well as in kidney and sperm (at protein level).

It is found in the membrane. The protein localises to the melanosome. The protein resides in the cytoplasm. It localises to the nucleus. Guanine nucleotide-binding proteins (G proteins) are involved as modulators or transducers in various transmembrane signaling systems. Activates effector molecule RhoA by binding and activating RhoGEFs (ARHGEF1/p115RhoGEF, ARHGEF11/PDZ-RhoGEF and ARHGEF12/LARG). GNA13-dependent Rho signaling subsequently regulates transcription factor AP-1 (activating protein-1). Promotes tumor cell invasion and metastasis by activating Rho/ROCK signaling pathway. Inhibits CDH1-mediated cell adhesion in a process independent from Rho activation. In lymphoid follicles, transmits P2RY8- and S1PR2-dependent signals that lead to inhibition of germinal center (GC) B cell growth and migration outside the GC niche. This is Guanine nucleotide-binding protein subunit alpha-13 (Gna13) from Mus musculus (Mouse).